Here is a 194-residue protein sequence, read N- to C-terminus: Ferredoxin, apicoplast (194 aa).

An apicoplast-targeting transit peptide spans 1–19; that stretch reads MNIVILLLILTFSIKHSNT. In terms of domain architecture, 2Fe-2S ferredoxin-type spans 99-189; that stretch reads YNITLRTNDG…DCVIETHKED (91 aa). 4 residues coordinate [2Fe-2S] cluster: C135, C140, C143, and C173.

It belongs to the 2Fe2S plant-type ferredoxin family. [2Fe-2S] cluster is required as a cofactor.

It localises to the plastid. The protein localises to the apicoplast. Ferredoxins are iron-sulfur proteins that transfer electrons in a wide variety of metabolic reactions. By transferring electrons to 4-hydroxy-3-methylbut-2-enyl diphosphate reductase LytB/IspH, plays a role in the terminal step of the DOXP/MEP pathway for isoprenoid precursor biosynthesis. This chain is Ferredoxin, apicoplast, found in Plasmodium falciparum (isolate 3D7).